Here is a 160-residue protein sequence, read N- to C-terminus: Dihydrofolate reductase (160 aa).

One can recognise a DHFR domain in the interval 2–159; sequence TFSLIVATTL…YDCRFLILTR (158 aa). I6 lines the substrate pocket. NADP(+) contacts are provided by residues A8 and 14–20; that span reads VIGKDNQ. D28 serves as a coordination point for substrate. Residue 46–47 coordinates NADP(+); it reads KT. The substrate site is built by R53 and R58. NADP(+) contacts are provided by residues 64–65 and 96–103; these read SR and GGGELFKQ. T114 is a substrate binding site.

It belongs to the dihydrofolate reductase family.

It catalyses the reaction (6S)-5,6,7,8-tetrahydrofolate + NADP(+) = 7,8-dihydrofolate + NADPH + H(+). The protein operates within cofactor biosynthesis; tetrahydrofolate biosynthesis; 5,6,7,8-tetrahydrofolate from 7,8-dihydrofolate: step 1/1. Functionally, key enzyme in folate metabolism. Catalyzes an essential reaction for de novo glycine and purine synthesis, and for DNA precursor synthesis. The chain is Dihydrofolate reductase (folA) from Haemophilus influenzae (strain ATCC 51907 / DSM 11121 / KW20 / Rd).